The primary structure comprises 44 residues: Protein PsbN (44 aa).

Residues 6-26 traverse the membrane as a helical segment; the sequence is FFFTIFLWCLLLSITGYSIYV.

This sequence belongs to the PsbN family.

Its subcellular location is the plastid. The protein localises to the chloroplast thylakoid membrane. Functionally, may play a role in photosystem I and II biogenesis. The chain is Protein PsbN from Chlorella vulgaris (Green alga).